A 140-amino-acid chain; its full sequence is Large ribosomal subunit protein uL11 (140 aa).

The protein belongs to the universal ribosomal protein uL11 family. As to quaternary structure, part of the ribosomal stalk of the 50S ribosomal subunit. Interacts with L10 and the large rRNA to form the base of the stalk. L10 forms an elongated spine to which L12 dimers bind in a sequential fashion forming a multimeric L10(L12)X complex. In terms of processing, one or more lysine residues are methylated.

Functionally, forms part of the ribosomal stalk which helps the ribosome interact with GTP-bound translation factors. The protein is Large ribosomal subunit protein uL11 of Staphylococcus carnosus (strain TM300).